The following is a 594-amino-acid chain: Estrogen receptor (594 aa).

The tract at residues 1 to 184 is modulating (transactivation AF-1); mediates interaction with MACROD1; the sequence is MTMTLHTKAS…AMESAKETRY (184 aa). The O-linked (GlcNAc) serine glycan is linked to S10. Positions 35-47 are required for interaction with NCOA1; it reads LERPLGEVYVESS. Residues 35-174 are interaction with DDX5; self-association; sequence LERPLGEVYV…LASSGDKGSM (140 aa). S104 and S106 each carry phosphoserine; by CDK2. The residue at position 118 (S118) is a Phosphoserine. Positions 152 to 173 are disordered; that stretch reads PNADNRRQGGRERLASSGDKGS. Residues 154–165 are compositionally biased toward basic and acidic residues; the sequence is ADNRRQGGRERL. The residue at position 167 (S167) is a Phosphoserine; by CK2. 2 consecutive NR C4-type zinc fingers follow at residues 185–205 and 221–245; these read CAVC…CEGC and CPAT…LRKC. The nuclear receptor DNA-binding region spans 185 to 250; sequence CAVCNDYASG…RLRKCYEVGM (66 aa). The mediates interaction with DNTTIP2 stretch occupies residues 185 to 310; it reads CAVCNDYASG…TKKISPVLSL (126 aa). Residues 251–310 are hinge; that stretch reads MKGGIRKDRRGGRMLKHKRQRDDGEGRNEAGPSGDRRPANFWPSPLLIKHTKKISPVLSL. Residues 257 to 269 show a composition bias toward basic residues; the sequence is KDRRGGRMLKHKR. The disordered stretch occupies residues 257–293; the sequence is KDRRGGRMLKHKRQRDDGEGRNEAGPSGDRRPANFWP. R260 is modified (asymmetric dimethylarginine; by PRMT1). The tract at residues 262 to 594 is interaction with AKAP13; that stretch reads GRMLKHKRQR…GEAEGFPNTI (333 aa). A self-association region spans residues 264-594; that stretch reads MLKHKRQRDD…GEAEGFPNTI (331 aa). A compositionally biased stretch (basic and acidic residues) spans 270–288; the sequence is QRDDGEGRNEAGPSGDRRP. The region spanning 311-546 is the NR LBD domain; sequence TAEQMISALL…DLLLEMLDAH (236 aa). A transactivation AF-2 region spans residues 311–594; the sequence is TAEQMISALL…GEAEGFPNTI (284 aa). 17beta-estradiol contacts are provided by E353 and R394. C447 carries S-palmitoyl cysteine lipidation. Residue H523 participates in 17beta-estradiol binding. Position 536 is a phosphotyrosine; by Tyr-kinases (Y536). Residues 551–575 are disordered; that stretch reads PANHGGAPMEETNQSQLATTGSTSP. Residues 561 to 575 show a composition bias toward polar residues; that stretch reads ETNQSQLATTGSTSP. O-linked (GlcNAc) threonine glycosylation is present at T570.

It belongs to the nuclear hormone receptor family. NR3 subfamily. As to quaternary structure, binds DNA as a homodimer. Can form a heterodimer with ESR2. Interacts with coactivator NCOA5. Interacts with PELP1, the interaction is enhanced by 17-beta-estradiol; the interaction increases ESR1 transcriptional activity. Interacts with NCOA7; the interaction is ligand-inducible. Interacts with AKAP13, CUEDC2, HEXIM1, KDM5A, MAP1S, SMARD1, and UBE1C. Interacts with MUC1; the interaction is stimulated by 7 beta-estradiol (E2) and enhances ESR1-mediated transcription. Interacts with DNTTIP2, and UIMC1. Interacts with KMT2D/MLL2. Interacts with ATAD2; the interaction is enhanced by estradiol. Interacts with KIF18A and LDB1. Interacts with RLIM (via its C-terminus). Interacts with MACROD1. Interacts with SH2D4A and PLCG. Interacts with SH2D4A; the interaction blocks binding to PLCG and inhibits estrogen-induced cell proliferation. Interacts with DYNLL1. Interacts with CCDC62; the interaction requires estradiol and appears to enhance the transcription of target genes. Interacts with NR2C1; the interaction prevents homodimerization of ESR1 and suppresses its transcriptional activity and cell growth. Interacts with DNAAF4. Interacts with PRMT2. Interacts with RBFOX2. Interacts with EP300; the interaction is estrogen-dependent and enhanced by CITED1. Interacts with CITED1; the interaction is estrogen-dependent. Interacts with FAM120B, FOXL2, PHB2 and SLC30A9. Interacts with coactivators NCOA3 and NCOA6. Interacts with STK3/MST2 only in the presence of SAV1 and vice-versa. Binds to CSNK1D. Interacts with NCOA2; NCOA2 can interact with ESR1 AF-1 and AF-2 domains simultaneously and mediate their transcriptional synergy. Interacts with DDX5. Interacts with NCOA1; the interaction seems to require a self-association of N-terminal and C-terminal regions. Interacts with ZNF366, DDX17, NFKB1, RELA, SP1 and SP3. Interacts with NRIP1. Interacts with GPER1; the interaction occurs in an estrogen-dependent manner. Interacts with CLOCK and the interaction is stimulated by estrogen. Interacts with TRIP4 (ufmylated); estrogen dependent. Interacts with LMTK3; the interaction phosphorylates ESR1 (in vitro) and protects it against proteasomal degradation. Interacts with CCAR2 (via N-terminus) in a ligand-independent manner. Interacts with ZFHX3. Interacts with SFR1 in a ligand-dependent and -independent manner. Interacts with DCAF13, LATS1 and DCAF1; regulates ESR1 ubiquitination and ubiquitin-mediated proteasomal degradation. Interacts (via DNA-binding domain) with POU4F2 (C-terminus); this interaction increases the estrogen receptor ESR1 transcriptional activity in a DNA- and ligand 17-beta-estradiol-independent manner. Interacts with ESRRB isoform 1. Interacts with UBE3A and WBP2. Interacts with GTF2B. Interacts with RBM39. In the absence of hormonal ligand, interacts with TACC1. Interacts with PI3KR1 or PI3KR2 and PTK2/FAK1. Interacts with SRC. Interacts with BAG1; the interaction is promoted in the absence of estradiol (17-beta-estradiol/E2). Interacts with and ubiquitinated by STUB1; the interaction is promoted in the absence of estradiol (17-beta-estradiol/E2). Interacts with NEDD8. Ubiquitinated; regulated by LATS1 via DCAF1 it leads to ESR1 proteasomal degradation. Deubiquitinated by OTUB1. Ubiquitinated by STUB1/CHIP; in the CA1 hippocampal region following loss of endogenous circulating estradiol (17-beta-estradiol/E2). Ubiquitinated by UBR5, leading to its degradation: UBR5 specifically recognizes and binds ligand-bound ESR1 when it is not associated with coactivators (NCOAs). In presence of NCOAs, the UBR5-degron is not accessible, preventing its ubiquitination and degradation. In terms of processing, phosphorylated by cyclin A/CDK2 and CK1. Phosphorylation probably enhances transcriptional activity. Dephosphorylation at Ser-118 by PPP5C inhibits its transactivation activity. Phosphorylated by LMTK3 (in vitro). Post-translationally, palmitoylated at Cys-447 by ZDHHC7 and ZDHHC21. Palmitoylation is required for plasma membrane targeting and for rapid intracellular signaling via ERK and AKT kinases and cAMP generation, but not for signaling mediated by the nuclear hormone receptor. Dimethylated by PRMT1 at Arg-260. The methylation may favor cytoplasmic localization. Demethylated by JMJD6 at Arg-260.

The protein localises to the nucleus. The protein resides in the cytoplasm. It localises to the golgi apparatus. Its subcellular location is the cell membrane. In terms of biological role, nuclear hormone receptor. The steroid hormones and their receptors are involved in the regulation of eukaryotic gene expression and affect cellular proliferation and differentiation in target tissues. Ligand-dependent nuclear transactivation involves either direct homodimer binding to a palindromic estrogen response element (ERE) sequence or association with other DNA-binding transcription factors, such as AP-1/c-Jun, c-Fos, ATF-2, Sp1 and Sp3, to mediate ERE-independent signaling. Ligand binding induces a conformational change allowing subsequent or combinatorial association with multiprotein coactivator complexes through LXXLL motifs of their respective components. Mutual transrepression occurs between the estrogen receptor (ER) and NF-kappa-B in a cell-type specific manner. Decreases NF-kappa-B DNA-binding activity and inhibits NF-kappa-B-mediated transcription from the IL6 promoter and displace RELA/p65 and associated coregulators from the promoter. Recruited to the NF-kappa-B response element of the CCL2 and IL8 promoters and can displace CREBBP. Present with NF-kappa-B components RELA/p65 and NFKB1/p50 on ERE sequences. Can also act synergistically with NF-kappa-B to activate transcription involving respective recruitment adjacent response elements; the function involves CREBBP. Can activate the transcriptional activity of TFF1. Also mediates membrane-initiated estrogen signaling involving various kinase cascades. Essential for MTA1-mediated transcriptional regulation of BRCA1 and BCAS3. Maintains neuronal survival in response to ischemic reperfusion injury when in the presence of circulating estradiol (17-beta-estradiol/E2). This chain is Estrogen receptor (ESR1), found in Equus caballus (Horse).